A 309-amino-acid chain; its full sequence is Methionyl-tRNA formyltransferase (309 aa).

109–112 serves as a coordination point for (6S)-5,6,7,8-tetrahydrofolate; the sequence is SLLP.

The protein belongs to the Fmt family.

It catalyses the reaction L-methionyl-tRNA(fMet) + (6R)-10-formyltetrahydrofolate = N-formyl-L-methionyl-tRNA(fMet) + (6S)-5,6,7,8-tetrahydrofolate + H(+). Its function is as follows. Attaches a formyl group to the free amino group of methionyl-tRNA(fMet). The formyl group appears to play a dual role in the initiator identity of N-formylmethionyl-tRNA by promoting its recognition by IF2 and preventing the misappropriation of this tRNA by the elongation apparatus. The sequence is that of Methionyl-tRNA formyltransferase from Clostridium perfringens (strain 13 / Type A).